A 447-amino-acid polypeptide reads, in one-letter code: Tubulin beta-5 chain (447 aa).

GTP contacts are provided by Gln11, Glu69, Ser138, Gly142, Thr143, Gly144, Asn204, and Asn226. Residue Glu69 participates in Mg(2+) binding.

It belongs to the tubulin family. Dimer of alpha and beta chains. A typical microtubule is a hollow water-filled tube with an outer diameter of 25 nm and an inner diameter of 15 nM. Alpha-beta heterodimers associate head-to-tail to form protofilaments running lengthwise along the microtubule wall with the beta-tubulin subunit facing the microtubule plus end conferring a structural polarity. Microtubules usually have 13 protofilaments but different protofilament numbers can be found in some organisms and specialized cells. It depends on Mg(2+) as a cofactor.

The protein resides in the cytoplasm. It localises to the cytoskeleton. Functionally, tubulin is the major constituent of microtubules, a cylinder consisting of laterally associated linear protofilaments composed of alpha- and beta-tubulin heterodimers. Microtubules grow by the addition of GTP-tubulin dimers to the microtubule end, where a stabilizing cap forms. Below the cap, tubulin dimers are in GDP-bound state, owing to GTPase activity of alpha-tubulin. This Triticum aestivum (Wheat) protein is Tubulin beta-5 chain (TUBB5).